A 185-amino-acid chain; its full sequence is Ribosome-recycling factor (185 aa).

It belongs to the RRF family.

It is found in the cytoplasm. Its function is as follows. Responsible for the release of ribosomes from messenger RNA at the termination of protein biosynthesis. May increase the efficiency of translation by recycling ribosomes from one round of translation to another. The protein is Ribosome-recycling factor of Proteus mirabilis (strain HI4320).